The chain runs to 234 residues: Ubiquitin domain-containing protein 1 (234 aa).

A disordered region spans residues Met-1–Asp-47. Positions Ser-12–Gly-21 are enriched in polar residues. Basic and acidic residues predominate over residues Leu-32–Ser-41. Positions Cys-152–Pro-227 constitute a Ubiquitin-like domain.

Functionally, may be involved in the regulation of cellular senescence through a positive feedback loop with TP53. The polypeptide is Ubiquitin domain-containing protein 1 (ubtd1) (Xenopus laevis (African clawed frog)).